The chain runs to 807 residues: Glycerol-3-phosphate acyltransferase (807 aa).

Residues 305-310 (CHRSHM) carry the HXXXXD motif motif.

Belongs to the GPAT/DAPAT family.

Its subcellular location is the cell inner membrane. The enzyme catalyses sn-glycerol 3-phosphate + an acyl-CoA = a 1-acyl-sn-glycero-3-phosphate + CoA. The protein operates within phospholipid metabolism; CDP-diacylglycerol biosynthesis; CDP-diacylglycerol from sn-glycerol 3-phosphate: step 1/3. The sequence is that of Glycerol-3-phosphate acyltransferase from Vibrio atlanticus (strain LGP32) (Vibrio splendidus (strain Mel32)).